We begin with the raw amino-acid sequence, 88 residues long: Exodeoxyribonuclease 7 small subunit (88 aa).

This sequence belongs to the XseB family. Heterooligomer composed of large and small subunits.

It is found in the cytoplasm. The catalysed reaction is Exonucleolytic cleavage in either 5'- to 3'- or 3'- to 5'-direction to yield nucleoside 5'-phosphates.. In terms of biological role, bidirectionally degrades single-stranded DNA into large acid-insoluble oligonucleotides, which are then degraded further into small acid-soluble oligonucleotides. This is Exodeoxyribonuclease 7 small subunit from Bordetella petrii (strain ATCC BAA-461 / DSM 12804 / CCUG 43448).